The following is a 544-amino-acid chain: Methionine--tRNA ligase 1 (544 aa).

The 'HIGH' region motif lies at 10–20 (PYANGSLHLGH). 4 residues coordinate Zn(2+): Cys-141, Cys-144, Cys-153, and Cys-156. Positions 329–333 (KLSTS) match the 'KMSKS' region motif. Residue Thr-332 coordinates ATP.

It belongs to the class-I aminoacyl-tRNA synthetase family. MetG type 1 subfamily. Monomer. It depends on Zn(2+) as a cofactor.

The protein localises to the cytoplasm. The enzyme catalyses tRNA(Met) + L-methionine + ATP = L-methionyl-tRNA(Met) + AMP + diphosphate. In terms of biological role, is required not only for elongation of protein synthesis but also for the initiation of all mRNA translation through initiator tRNA(fMet) aminoacylation. The polypeptide is Methionine--tRNA ligase 1 (Bacillus cereus (strain ATCC 10987 / NRS 248)).